Here is a 312-residue protein sequence, read N- to C-terminus: Zinc transporter ZitB (312 aa).

A run of 6 helical transmembrane segments spans residues 16–36 (LLIAFAITTLFMVTEAIGGWL), 40–60 (LALLADTGHMLTDSAALFIAL), 81–101 (LTTLAAFVNAAALLLIVILIV), 117–137 (TPMLIIAIAGLLANIFCFWIL), 153–173 (LHVLSDLLGSVGAMIAAIVIL), and 177–197 (WTPIDPILSVLVSVLILRNAW).

Belongs to the cation diffusion facilitator (CDF) transporter (TC 2.A.4) family. SLC30A subfamily.

It is found in the cell inner membrane. Involved in zinc efflux across the cytoplasmic membrane, thus reducing zinc accumulation in the cytoplasm and rendering bacteria more resistant to zinc. It may contribute to zinc homeostasis at low concentrations of zinc. This is Zinc transporter ZitB from Yersinia pseudotuberculosis serotype I (strain IP32953).